Reading from the N-terminus, the 467-residue chain is Tubulointerstitial nephritis antigen-like (467 aa).

Residues 1 to 21 form the signal peptide; it reads MWRCPLGLLLLLPLAGHLALG. The 49-residue stretch at 50-98 folds into the SMB domain; sequence EQDLCCRGRADDCALPYLGAICYCDLFCNRTVSDCCPDFWDFCLGVPPP. 5 cysteine pairs are disulfide-bonded: C54-C73, C71-C73, C71-C85, C77-C84, and C85-C92. N78 carries an N-linked (GlcNAc...) asparagine glycan. N161 is a glycosylation site (N-linked (GlcNAc...) asparagine).

This sequence belongs to the peptidase C1 family. Post-translationally, glycosylated. Highly expressed in aorta, heart, placenta, kidney and a colorectal adenocarcinoma cell line. Moderately expressed in skeletal muscle, pancreas, lung, lymph nodes, adrenal gland, bone marrow and thyroid. Weakly expressed in colon, small intestine, ovary, spleen, testis and prostate. Predominantly found in vascular smooth muscle cells, but also in cardiac and skeletal muscle cells as well as kidney.

The protein localises to the secreted. May be implicated in the adrenocortical zonation and in mechanisms for repressing the CYP11B1 gene expression in adrenocortical cells. This is a non catalytic peptidase C1 family protein. The protein is Tubulointerstitial nephritis antigen-like (TINAGL1) of Homo sapiens (Human).